The chain runs to 150 residues: Thyroid hormone-inducible hepatic protein (150 aa).

The tract at residues 83–105 (KVAGNEGSEAENEAAETEEAEED) is disordered. Serine 90 bears the Phosphoserine mark. Over residues 90–105 (SEAENEAAETEEAEED) the composition is skewed to acidic residues.

Belongs to the SPOT14 family. Homodimer. Heterodimer with MID1IP1. Interacts with THRB and PLAGL1. In terms of tissue distribution, highly expressed in liver, lactating mammary gland, epididymal, retroperitoneal and brown fat. Mainly expressed in tissues that synthesize triglycerides.

The protein localises to the nucleus. It is found in the cytoplasm. In terms of biological role, plays a role in the regulation of lipogenesis, especially in lactating mammary gland. Important for the biosynthesis of triglycerides with medium-length fatty acid chains. May modulate lipogenesis by interacting with MID1IP1 and preventing its interaction with ACACA. May function as transcriptional coactivator. May modulate the transcription factor activity of THRB. The protein is Thyroid hormone-inducible hepatic protein (Thrsp) of Rattus norvegicus (Rat).